Reading from the N-terminus, the 209-residue chain is Outer-membrane lipoprotein LolB (209 aa).

The signal sequence occupies residues 1 to 17 (MATVFSRALGALVLGVA). C18 carries the N-palmitoyl cysteine lipid modification. C18 carries the S-diacylglycerol cysteine lipid modification.

Belongs to the LolB family. Monomer.

It localises to the cell outer membrane. In terms of biological role, plays a critical role in the incorporation of lipoproteins in the outer membrane after they are released by the LolA protein. This is Outer-membrane lipoprotein LolB from Ralstonia nicotianae (strain ATCC BAA-1114 / GMI1000) (Ralstonia solanacearum).